We begin with the raw amino-acid sequence, 173 residues long: Acireductone dioxygenase (173 aa).

Residues methionine 1–glycine 20 are disordered. Residues histidine 81, histidine 83, glutamate 87, and histidine 126 each coordinate Fe(2+). The Ni(2+) site is built by histidine 81, histidine 83, glutamate 87, and histidine 126.

Belongs to the acireductone dioxygenase (ARD) family. Fe(2+) is required as a cofactor. Ni(2+) serves as cofactor.

The protein resides in the cytoplasm. It localises to the nucleus. It carries out the reaction 1,2-dihydroxy-5-(methylsulfanyl)pent-1-en-3-one + O2 = 4-methylsulfanyl-2-oxobutanoate + formate + 2 H(+). The enzyme catalyses 1,2-dihydroxy-5-(methylsulfanyl)pent-1-en-3-one + O2 = 3-(methylsulfanyl)propanoate + CO + formate + 2 H(+). Its pathway is amino-acid biosynthesis; L-methionine biosynthesis via salvage pathway; L-methionine from S-methyl-5-thio-alpha-D-ribose 1-phosphate: step 5/6. Catalyzes 2 different reactions between oxygen and the acireductone 1,2-dihydroxy-3-keto-5-methylthiopentene (DHK-MTPene) depending upon the metal bound in the active site. Fe-containing acireductone dioxygenase (Fe-ARD) produces formate and 2-keto-4-methylthiobutyrate (KMTB), the alpha-ketoacid precursor of methionine in the methionine recycle pathway. Ni-containing acireductone dioxygenase (Ni-ARD) produces methylthiopropionate, carbon monoxide and formate, and does not lie on the methionine recycle pathway. This chain is Acireductone dioxygenase, found in Tuber melanosporum (strain Mel28) (Perigord black truffle).